The sequence spans 204 residues: Sec-independent protein translocase protein TatB (204 aa).

A helical membrane pass occupies residues 1-21; that stretch reads MFDIGFSELLLIFIVGLVVLG. A compositionally biased stretch (polar residues) spans 154–166; the sequence is VVSSVDSIQNGQS. Positions 154–204 are disordered; sequence VVSSVDSIQNGQSDLELDAQAEVDRQLAAMMDKYAPPDDVAENPISTEKTS.

It belongs to the TatB family. In terms of assembly, the Tat system comprises two distinct complexes: a TatABC complex, containing multiple copies of TatA, TatB and TatC subunits, and a separate TatA complex, containing only TatA subunits. Substrates initially bind to the TatABC complex, which probably triggers association of the separate TatA complex to form the active translocon.

It localises to the cell inner membrane. Its function is as follows. Part of the twin-arginine translocation (Tat) system that transports large folded proteins containing a characteristic twin-arginine motif in their signal peptide across membranes. Together with TatC, TatB is part of a receptor directly interacting with Tat signal peptides. TatB may form an oligomeric binding site that transiently accommodates folded Tat precursor proteins before their translocation. This chain is Sec-independent protein translocase protein TatB, found in Mannheimia succiniciproducens (strain KCTC 0769BP / MBEL55E).